Reading from the N-terminus, the 261-residue chain is Cytochrome c oxidase subunit 3 (261 aa).

Over 1–15 (MAHQAHAYHMVDPSP) the chain is Mitochondrial matrix. A helical transmembrane segment spans residues 16–34 (WPLTGAIAALLLTSGTAVW). Over 35–40 (FHFHSL) the chain is Mitochondrial intermembrane. A helical transmembrane segment spans residues 41-66 (TLLTLGNILLLLTMYQWWRDIIREGT). Topologically, residues 67 to 72 (FQGHHT) are mitochondrial matrix. A helical membrane pass occupies residues 73–105 (PPVQKGLRYGMILFITSEVFFFLGFFWAFYHAS). The Mitochondrial intermembrane portion of the chain corresponds to 106-128 (LAPTPELGGCWPPAGITTLDPFE). Residues 129–152 (VPLLNTAVLLASGVTVTWAHHSIM) form a helical membrane-spanning segment. Residues 153–155 (EGE) lie on the Mitochondrial matrix side of the membrane. Residues 156–183 (RKQTIQALTLTILLGFYFTFLQGMEYYE) traverse the membrane as a helical segment. At 184–190 (APFTIAD) the chain is on the mitochondrial intermembrane side. A helical transmembrane segment spans residues 191–223 (GVYGSTFFVATGFHGLHVIIGSTFLAVCLLRQV). Residues 224–232 (QYHFTSEHH) are Mitochondrial matrix-facing. Residues 233-256 (FGFEAAAWYWHFVDVVWLFLYVSI) traverse the membrane as a helical segment. Topologically, residues 257 to 261 (YWWGS) are mitochondrial intermembrane.

This sequence belongs to the cytochrome c oxidase subunit 3 family. In terms of assembly, component of the cytochrome c oxidase (complex IV, CIV), a multisubunit enzyme composed of 14 subunits. The complex is composed of a catalytic core of 3 subunits MT-CO1, MT-CO2 and MT-CO3, encoded in the mitochondrial DNA, and 11 supernumerary subunits COX4I, COX5A, COX5B, COX6A, COX6B, COX6C, COX7A, COX7B, COX7C, COX8 and NDUFA4, which are encoded in the nuclear genome. The complex exists as a monomer or a dimer and forms supercomplexes (SCs) in the inner mitochondrial membrane with NADH-ubiquinone oxidoreductase (complex I, CI) and ubiquinol-cytochrome c oxidoreductase (cytochrome b-c1 complex, complex III, CIII), resulting in different assemblies (supercomplex SCI(1)III(2)IV(1) and megacomplex MCI(2)III(2)IV(2)).

The protein resides in the mitochondrion inner membrane. It catalyses the reaction 4 Fe(II)-[cytochrome c] + O2 + 8 H(+)(in) = 4 Fe(III)-[cytochrome c] + 2 H2O + 4 H(+)(out). Component of the cytochrome c oxidase, the last enzyme in the mitochondrial electron transport chain which drives oxidative phosphorylation. The respiratory chain contains 3 multisubunit complexes succinate dehydrogenase (complex II, CII), ubiquinol-cytochrome c oxidoreductase (cytochrome b-c1 complex, complex III, CIII) and cytochrome c oxidase (complex IV, CIV), that cooperate to transfer electrons derived from NADH and succinate to molecular oxygen, creating an electrochemical gradient over the inner membrane that drives transmembrane transport and the ATP synthase. Cytochrome c oxidase is the component of the respiratory chain that catalyzes the reduction of oxygen to water. Electrons originating from reduced cytochrome c in the intermembrane space (IMS) are transferred via the dinuclear copper A center (CU(A)) of subunit 2 and heme A of subunit 1 to the active site in subunit 1, a binuclear center (BNC) formed by heme A3 and copper B (CU(B)). The BNC reduces molecular oxygen to 2 water molecules using 4 electrons from cytochrome c in the IMS and 4 protons from the mitochondrial matrix. The chain is Cytochrome c oxidase subunit 3 (mt-co3) from Oncorhynchus mykiss (Rainbow trout).